A 1022-amino-acid chain; its full sequence is Translation initiation factor IF-2 (1022 aa).

Over residues 82 to 94 (EQSRKTLEKEQHL) the composition is skewed to basic and acidic residues. 2 disordered regions span residues 82–129 (EQSR…AVPA) and 342–436 (SENK…QREL). Residues 104 to 115 (ASKSSAKGSESA) are compositionally biased toward low complexity. A compositionally biased stretch (basic residues) spans 375 to 384 (KAKKGKKKKK). Over residues 421-436 (SEREREQEEGAAQREL) the composition is skewed to basic and acidic residues. Residues 519-689 (TRPPVVTIMG…LTEAELRELK (171 aa)) form the tr-type G domain. The segment at 528-535 (GHVDHGKT) is G1. 528–535 (GHVDHGKT) is a GTP binding site. The interval 553–557 (GITQH) is G2. The interval 575 to 578 (DTPG) is G3. Residues 575–579 (DTPGH) and 629–632 (NKID) each bind GTP. Positions 629–632 (NKID) are G4. The tract at residues 665-667 (SAK) is G5.

This sequence belongs to the TRAFAC class translation factor GTPase superfamily. Classic translation factor GTPase family. IF-2 subfamily.

Its subcellular location is the cytoplasm. One of the essential components for the initiation of protein synthesis. Protects formylmethionyl-tRNA from spontaneous hydrolysis and promotes its binding to the 30S ribosomal subunits. Also involved in the hydrolysis of GTP during the formation of the 70S ribosomal complex. The polypeptide is Translation initiation factor IF-2 (Chlorobium chlorochromatii (strain CaD3)).